Reading from the N-terminus, the 131-residue chain is Protein Bouncer (131 aa).

An N-terminal signal peptide occupies residues M1–C26. Intrachain disulfides connect C31–C56, C50–C74, C80–C99, and C100–C105. The UPAR/Ly6 domain occupies C31 to N106. An N-linked (GlcNAc...) asparagine glycan is attached at N65. N106 is lipidated: GPI-anchor amidated asparagine. The propeptide at R107–T131 is removed in mature form.

The protein belongs to the SPACA4/bouncer family. As to quaternary structure, interacts with spermatocyte complex composed of izumo1, spaca6 and tmem81. In terms of tissue distribution, expressed in oocytes. Not expressed in testis.

The protein localises to the cell membrane. Oocyte-expressed fertilization factor that mediates sperm-egg binding and is essential for sperm entry into the egg. Necessary and sufficient to mediate species-specific gamete recognition and fertilization, which is essential for vertebrate species performing external fertilization. External fertilization cannot guarantee that only conspecific sperm reaches the egg by precopulatory mate choice: proteins such as Bouncer can therefore support the selection of conspecific sperm. The protein is Protein Bouncer of Oryzias latipes (Japanese rice fish).